We begin with the raw amino-acid sequence, 359 residues long: Small ribosomal subunit protein mS22 (359 aa).

Residues 40–65 are disordered; it reads RPQPFEVGQPRRLLSSEAESGSSEVK. Residue S54 is modified to Phosphoserine. The residue at position 210 (K210) is an N6-acetyllysine.

It belongs to the mitochondrion-specific ribosomal protein mS22 family. In terms of assembly, component of the mitochondrial ribosome small subunit (28S) which comprises a 12S rRNA and about 30 distinct proteins.

The protein localises to the mitochondrion. The sequence is that of Small ribosomal subunit protein mS22 (Mrps22) from Mus musculus (Mouse).